Here is a 714-residue protein sequence, read N- to C-terminus: Protein artemis (714 aa).

Disordered regions lie at residues 391–500 (ELFD…ESNA), 516–577 (ESSE…TVLI), 598–617 (ALLS…RWKL), and 638–683 (EKDA…LTPD). Polar residues predominate over residues 427–440 (NESTESYRANTAYT). Over residues 447–468 (VDCEESNDDDDDDDDDDKEDDS) the composition is skewed to acidic residues. Polar residues-rich tracts occupy residues 484-500 (SIAS…ESNA) and 532-543 (GSQSLFSDSDGV). Residues 544–561 (SDSTHISSQNSSQSTHIS) show a composition bias toward low complexity. The span at 562–577 (EQGSQGWDSQMDTVLI) shows a compositional bias: polar residues. Basic and acidic residues-rich tracts occupy residues 603–615 (DTPR…DSRW) and 660–670 (RTPDLELKRDS). Serine 670 bears the Phosphoserine; by ATM mark.

The protein belongs to the DNA repair metallo-beta-lactamase (DRMBL) family. Interacts with PRKDC. In terms of processing, phosphorylation on undefined residues by PRKDC may stimulate endonucleolytic activity on 5' and 3' hairpins and overhangs. PRKDC must remain present, even after phosphorylation, for efficient hairpin opening.

It is found in the nucleus. Its function is as follows. Required for V(D)J recombination, the process by which exons encoding the antigen-binding domains of immunoglobulins and T-cell receptor proteins are assembled from individual V, (D), and J gene segments. V(D)J recombination is initiated by the lymphoid specific RAG endonuclease complex, which generates site specific DNA double strand breaks (DSBs). These DSBs present two types of DNA end structures: hairpin sealed coding ends and phosphorylated blunt signal ends. These ends are independently repaired by the non homologous end joining (NHEJ) pathway to form coding and signal joints respectively. This protein exhibits single-strand specific 5'-3' exonuclease activity in isolation, and acquires endonucleolytic activity on 5' and 3' hairpins and overhangs when in a complex with PRKDC. The latter activity is required specifically for the resolution of closed hairpins prior to the formation of the coding joint. May also be required for the repair of complex DSBs induced by ionizing radiation, which require substantial end-processing prior to religation by NHEJ. The chain is Protein artemis (DCLRE1C) from Gallus gallus (Chicken).